The primary structure comprises 156 residues: Crossover junction endodeoxyribonuclease RuvC (156 aa).

Active-site residues include Asp-7, Glu-66, and Asp-138. Mg(2+) is bound by residues Asp-7, Glu-66, and Asp-138.

The protein belongs to the RuvC family. As to quaternary structure, homodimer which binds Holliday junction (HJ) DNA. The HJ becomes 2-fold symmetrical on binding to RuvC with unstacked arms; it has a different conformation from HJ DNA in complex with RuvA. In the full resolvosome a probable DNA-RuvA(4)-RuvB(12)-RuvC(2) complex forms which resolves the HJ. The cofactor is Mg(2+).

The protein localises to the cytoplasm. It catalyses the reaction Endonucleolytic cleavage at a junction such as a reciprocal single-stranded crossover between two homologous DNA duplexes (Holliday junction).. In terms of biological role, the RuvA-RuvB-RuvC complex processes Holliday junction (HJ) DNA during genetic recombination and DNA repair. Endonuclease that resolves HJ intermediates. Cleaves cruciform DNA by making single-stranded nicks across the HJ at symmetrical positions within the homologous arms, yielding a 5'-phosphate and a 3'-hydroxyl group; requires a central core of homology in the junction. The consensus cleavage sequence is 5'-(A/T)TT(C/G)-3'. Cleavage occurs on the 3'-side of the TT dinucleotide at the point of strand exchange. HJ branch migration catalyzed by RuvA-RuvB allows RuvC to scan DNA until it finds its consensus sequence, where it cleaves and resolves the cruciform DNA. This chain is Crossover junction endodeoxyribonuclease RuvC, found in Ehrlichia chaffeensis (strain ATCC CRL-10679 / Arkansas).